Consider the following 348-residue polypeptide: MNILRSVVSRGRKGLKQEKVNRSFAYLDMVYITSKVIAMSTPAAGIHKLYRNDELDVFKYLTTQLKDNWILLNLCAEETVYHLELFKPNVINYGFQDHNPPPLLFLWAIVMNMDALFQTQPLLTLVVHCKAGKGRTGTVICSYLVAFGGLTAKQSLELYTEKRMVRGHGLTISSQIRYVYYIEILKQFPNYLKAVEFNTGTTFFKSFKCLNIKKNSSLILSLHAFSKGRNINPVALWKSSDISSHNVSIKEGKRIWGIQCNLETSEKDLLLRVERKGQFYFPSSVQCWFHTHFQPMLVEYTNGINFQQGINSFLQGQQSISFSWSEMDNSRRSDPFFEQLTIVYENVF.

The Phosphatase tensin-type domain occupies 18 to 189; it reads EKVNRSFAYL…YYIEILKQFP (172 aa). Residue C129 is the Phosphocysteine intermediate of the active site.

The protein localises to the cytoplasmic vesicle. It catalyses the reaction a 1,2-diacyl-sn-glycero-3-phospho-(1D-myo-inositol-3,4,5-trisphosphate) + H2O = a 1,2-diacyl-sn-glycero-3-phospho-(1D-myo-inositol-4,5-bisphosphate) + phosphate. It carries out the reaction 1,2-dioctanoyl-sn-glycero-3-phospho-(1D-myo-inositol-3,4,5-trisphosphate) + H2O = 1,2-dioctanoyl-sn-glycero-3-phospho-(1D-myo-inositol-4,5-bisphosphate) + phosphate. The catalysed reaction is 1,2-dihexadecanoyl-sn-glycero-3-phospho-(1D-myo-inositol-3,4,5-trisphosphate) + H2O = 1,2-dihexadecanoyl-sn-glycero-3-phospho-(1D-myo-inositol-4,5-bisphosphate) + phosphate. Its function is as follows. Acts as a phosphoinositide 3-phosphatase and regulates PtdIns(3,4,5)P3 levels. This Schizosaccharomyces pombe (strain 972 / ATCC 24843) (Fission yeast) protein is Phosphatidylinositol 3,4,5-trisphosphate 3-phosphatase ptn1 (ptn1).